The chain runs to 119 residues: Multi-drug resistance efflux pump PmrA homolog (119 aa).

Transmembrane regions (helical) follow at residues 1 to 20, 22 to 42, 64 to 84, and 88 to 108; these read ILIGLVFTFVIYLPMAFVQS, LQLGILRFLLGFGAGALMPSV, MCSNLGMVTGPLVGSAIAGYI, and AAIVGTSLFVIVNIIWSFINF.

The protein belongs to the major facilitator superfamily.

It localises to the cell membrane. The chain is Multi-drug resistance efflux pump PmrA homolog (pmrA) from Lactococcus lactis subsp. cremoris (Streptococcus cremoris).